The chain runs to 45 residues: Lysis protein for colicin E1 (45 aa).

A signal peptide spans 1 to 17 (MRKRFFVGIFAINLLVG). The N-palmitoyl cysteine moiety is linked to residue Cys18. Residue Cys18 is the site of S-diacylglycerol cysteine attachment.

It is found in the cell outer membrane. Its function is as follows. Lysis proteins are required for both colicin release and partial cell lysis. This chain is Lysis protein for colicin E1 (lys), found in Escherichia coli.